Reading from the N-terminus, the 325-residue chain is GMP reductase (325 aa).

The active-site Thioimidate intermediate is cysteine 174. 203–226 (LIADGGIRTHGDIAKSIRFGATMV) serves as a coordination point for NADP(+).

The protein belongs to the IMPDH/GMPR family. GuaC type 2 subfamily.

The enzyme catalyses IMP + NH4(+) + NADP(+) = GMP + NADPH + 2 H(+). Catalyzes the irreversible NADPH-dependent deamination of GMP to IMP. It functions in the conversion of nucleobase, nucleoside and nucleotide derivatives of G to A nucleotides, and in maintaining the intracellular balance of A and G nucleotides. This Pediococcus pentosaceus (strain ATCC 25745 / CCUG 21536 / LMG 10740 / 183-1w) protein is GMP reductase.